The sequence spans 571 residues: Phosphoenolpyruvate-protein phosphotransferase (571 aa).

The active-site Tele-phosphohistidine intermediate is the histidine 203. The phosphoenolpyruvate site is built by arginine 306 and arginine 342. Mg(2+) contacts are provided by glutamate 429 and aspartate 453. Residues 452-453 (ND) and arginine 463 contribute to the phosphoenolpyruvate site. Catalysis depends on cysteine 500, which acts as the Proton donor.

It belongs to the PEP-utilizing enzyme family. In terms of assembly, homodimer. Requires Mg(2+) as cofactor.

Its subcellular location is the cytoplasm. The enzyme catalyses L-histidyl-[protein] + phosphoenolpyruvate = N(pros)-phospho-L-histidyl-[protein] + pyruvate. General (non sugar-specific) component of the phosphoenolpyruvate-dependent sugar phosphotransferase system (sugar PTS). This major carbohydrate active-transport system catalyzes the phosphorylation of incoming sugar substrates concomitantly with their translocation across the cell membrane. Enzyme I transfers the phosphoryl group from phosphoenolpyruvate (PEP) to the phosphoryl carrier protein (HPr). This is Phosphoenolpyruvate-protein phosphotransferase (ptsI) from Chlamydia pneumoniae (Chlamydophila pneumoniae).